Reading from the N-terminus, the 308-residue chain is Elongation factor Ts (308 aa).

The segment at 80–83 (TDFV) is involved in Mg(2+) ion dislocation from EF-Tu.

This sequence belongs to the EF-Ts family.

The protein resides in the cytoplasm. Associates with the EF-Tu.GDP complex and induces the exchange of GDP to GTP. It remains bound to the aminoacyl-tRNA.EF-Tu.GTP complex up to the GTP hydrolysis stage on the ribosome. The sequence is that of Elongation factor Ts from Rhizobium etli (strain CIAT 652).